Here is a 122-residue protein sequence, read N- to C-terminus: Ribosomal protein eL22-like (122 aa).

Residues Ser112, Ser118, and Ser120 each carry the phosphoserine modification.

The protein belongs to the eukaryotic ribosomal protein eL22 family.

This Homo sapiens (Human) protein is Ribosomal protein eL22-like (RPL22L1).